We begin with the raw amino-acid sequence, 241 residues long: DNA repair protein RecO (241 aa).

It belongs to the RecO family.

Its function is as follows. Involved in DNA repair and RecF pathway recombination. This Yersinia pseudotuberculosis serotype O:1b (strain IP 31758) protein is DNA repair protein RecO.